The chain runs to 175 residues: Cyclic pyranopterin monophosphate synthase (175 aa).

Substrate contacts are provided by residues 78–80 and 125–126; these read LCH and ME. The active site involves D140.

It belongs to the MoaC family. Homohexamer; trimer of dimers.

The enzyme catalyses (8S)-3',8-cyclo-7,8-dihydroguanosine 5'-triphosphate = cyclic pyranopterin phosphate + diphosphate. It participates in cofactor biosynthesis; molybdopterin biosynthesis. In terms of biological role, catalyzes the conversion of (8S)-3',8-cyclo-7,8-dihydroguanosine 5'-triphosphate to cyclic pyranopterin monophosphate (cPMP). The polypeptide is Cyclic pyranopterin monophosphate synthase (Rhodopirellula baltica (strain DSM 10527 / NCIMB 13988 / SH1)).